Reading from the N-terminus, the 1310-residue chain is Rho family-interacting cell polarization regulator 2 (1310 aa).

Phosphoserine is present on residues Ser123 and Ser178. The tract at residues 196–254 (MHNLGHKNTNTPKEPQPKRVEEVYRALKNGLDEYLEFHQTELDKLTAQLKDMKRNSRLG) is involved in cell filopodia formation. Residues 224–253 (NGLDEYLEFHQTELDKLTAQLKDMKRNSRL) adopt a coiled-coil conformation. Ser508 carries the phosphoserine modification. The segment covering 588–608 (SSLSSQNEGTEDSSSASSRNS) has biased composition (polar residues). Positions 588-639 (SSLSSQNEGTEDSSSASSRNSLGEDHEPKSHSKSDTVEPKKPSVDARSGTES) are disordered. The segment covering 609–631 (LGEDHEPKSHSKSDTVEPKKPSV) has biased composition (basic and acidic residues). Ser682 carries the post-translational modification Phosphoserine.

The protein belongs to the RIPOR family. In terms of assembly, homooligomer; homooligomerization is regulated by RHOC and leads to the formation of concatemers through the association of N- and C-termini. Interacts (phosphorylated form) with 14-3-3 proteins; these interactions occur during myogenic cell differentiation and also induces T cell proliferation arrest. Interacts (phosphorylated form) with HDAC6; this interaction occurs during early myogenic differentiation, prevents HDAC6 to deacetylate tubulin and also induces T cell proliferation arrest. Interacts with DYSF; this interaction occurs during early myogenic differentiation. Interacts with MYOF. Interacts (via active GTP- or inactive GDP-bound forms) with RHOA; this interaction is direct, blocks the loading of GTP to RHOA and decreases upon chemokine CCL19 stimulation in primary T lymphocytes. Interacts with RHOC. Interacts (via phosphorylated form) with YWHAB; this interaction occurs in a chemokine-dependent manner and does not compete for binding of RIPOR2 with RHOA nor blocks inhibition of RIPOR2-mediated RHOA activity. Interacts with YWHAE. Interacts with YWHAQ. In terms of processing, phosphorylated. Chemokine-induced phosphorylation in neutrophils occurs in a PKC- and AKT-dependent manner, resulting in RIPOR2 interaction with YWHAB and stabilization. Phosphorylated by PKCA, AKT1 and MAPKAPK1A; in vitro. Expressed in the cochlea (at protein level).

Its subcellular location is the cytoplasm. It localises to the cytoskeleton. The protein resides in the cell projection. The protein localises to the filopodium. It is found in the apical cell membrane. Its subcellular location is the stereocilium. It localises to the stereocilium membrane. Functionally, acts as an inhibitor of the small GTPase RHOA and plays several roles in the regulation of myoblast and hair cell differentiation, lymphocyte T proliferation and neutrophil polarization. Plays a role in fetal mononuclear myoblast differentiation by promoting filopodia and myotube formation. Maintains naive T lymphocytes in a quiescent state and prevents chemokine-induced T lymphocyte responses, such as cell adhesion, polarization and migration. Involved also in the regulation of neutrophil polarization, chemotaxis and adhesion. Required for normal development of inner and outer hair cell stereocilia within the cochlea of the inner ear. Plays a role for maintaining the structural organization of the basal domain of stereocilia. Involved in mechanosensory hair cell function. Required for normal hearing. The protein is Rho family-interacting cell polarization regulator 2 of Rattus norvegicus (Rat).